The sequence spans 61 residues: MIIAFKIVFVNIFSLQHNAAIEVSLTAEYAMHTLKTKIRRKSFHLQMYHTFLNIARKAEKI.

This is an uncharacterized protein from Bacillus subtilis (strain 168).